A 550-amino-acid chain; its full sequence is MISDNVKKGVIRSPNRALLKACGYSDEDMEKPFIGVVNSFTEVVPGHIHLKTLSDVVKHGVYANGGTPFEFNTIGICDGIAMGHEGMKYSLPSREIIADAVESMARAHGFDGLVLIPTCDKIVPGMIMGALRLNIPFIVVTGGPMLPGEFQGKKYELISLFEGVGEYQVGKITEEELRCIEDCACPGAGSCAGLYTANSMACLTEALGLSLPMCATTHAIDAQKVRLAKKSGSKIVNMVKEDLKPTDILTKEAFENAILVDLALGGSTNTTLHIPAIANEIENKFITLDDFDRLSDEVPHIASIKPGGNHYMIDLHNAGGIPAVFNVLKEKIRNTKTVDGRSTLEIAESVKYINYNVIRKVEAPVHETAGLRVLKGNLAPNGCVVKIGAVNPKMHKHEGPAKVYNSEDEAISAILGGEIVKGDVVVIRYEGPSGGPGMREMLSPTSAICGMGLDDSVALITDGRFSGGSRGPCIGHVSPEAAAGGVIAAIENGDIIKIDMIGKEINVDLDESVIKERLSKLGEFEPKIKKGYLSRYSRLVSSADEGAVLK.

Aspartate 78 contacts Mg(2+). Cysteine 119 provides a ligand contact to [2Fe-2S] cluster. Positions 120 and 121 each coordinate Mg(2+). Lysine 121 is subject to N6-carboxylysine. Cysteine 191 is a binding site for [2Fe-2S] cluster. Glutamate 440 lines the Mg(2+) pocket. The active-site Proton acceptor is the serine 466.

It belongs to the IlvD/Edd family. As to quaternary structure, homodimer. It depends on [2Fe-2S] cluster as a cofactor. Mg(2+) serves as cofactor.

The enzyme catalyses (2R)-2,3-dihydroxy-3-methylbutanoate = 3-methyl-2-oxobutanoate + H2O. It catalyses the reaction (2R,3R)-2,3-dihydroxy-3-methylpentanoate = (S)-3-methyl-2-oxopentanoate + H2O. The protein operates within amino-acid biosynthesis; L-isoleucine biosynthesis; L-isoleucine from 2-oxobutanoate: step 3/4. It participates in amino-acid biosynthesis; L-valine biosynthesis; L-valine from pyruvate: step 3/4. Its function is as follows. Functions in the biosynthesis of branched-chain amino acids. Catalyzes the dehydration of (2R,3R)-2,3-dihydroxy-3-methylpentanoate (2,3-dihydroxy-3-methylvalerate) into 2-oxo-3-methylpentanoate (2-oxo-3-methylvalerate) and of (2R)-2,3-dihydroxy-3-methylbutanoate (2,3-dihydroxyisovalerate) into 2-oxo-3-methylbutanoate (2-oxoisovalerate), the penultimate precursor to L-isoleucine and L-valine, respectively. The chain is Dihydroxy-acid dehydratase from Methanococcus maripaludis (strain C6 / ATCC BAA-1332).